The following is a 1410-amino-acid chain: DNA-directed RNA polymerase subunit beta' (1410 aa).

4 residues coordinate Zn(2+): Cys-69, Cys-71, Cys-84, and Cys-87. Mg(2+) is bound by residues Asp-461, Asp-463, and Asp-465. 4 residues coordinate Zn(2+): Cys-810, Cys-884, Cys-891, and Cys-894.

This sequence belongs to the RNA polymerase beta' chain family. In terms of assembly, the RNAP catalytic core consists of 2 alpha, 1 beta, 1 beta' and 1 omega subunit. When a sigma factor is associated with the core the holoenzyme is formed, which can initiate transcription. Mg(2+) is required as a cofactor. It depends on Zn(2+) as a cofactor.

It catalyses the reaction RNA(n) + a ribonucleoside 5'-triphosphate = RNA(n+1) + diphosphate. Its function is as follows. DNA-dependent RNA polymerase catalyzes the transcription of DNA into RNA using the four ribonucleoside triphosphates as substrates. The chain is DNA-directed RNA polymerase subunit beta' from Ehrlichia chaffeensis (strain ATCC CRL-10679 / Arkansas).